Here is a 301-residue protein sequence, read N- to C-terminus: Probable alpha-L-glutamate ligase (301 aa).

The 184-residue stretch at 104–287 folds into the ATP-grasp domain; it reads LQLLSRRGIG…VAGMIIEYLE (184 aa). ATP contacts are provided by residues Lys-141, 178–179, Asp-187, and 211–213; these read EY and RSN. Asp-248, Glu-260, and Asn-262 together coordinate Mg(2+). Positions 248, 260, and 262 each coordinate Mn(2+).

Belongs to the RimK family. The cofactor is Mg(2+). Mn(2+) serves as cofactor.

This is Probable alpha-L-glutamate ligase from Pseudomonas savastanoi pv. phaseolicola (strain 1448A / Race 6) (Pseudomonas syringae pv. phaseolicola (strain 1448A / Race 6)).